We begin with the raw amino-acid sequence, 347 residues long: MAYYKGAASEGGRAMQLMKKREIAQQEIEFRKKKIEEDLKVSNIESKFATHYDAVEQQLKTSTIGLVTLDEMKQKQEDIVREREKKLAQKKEEKDREKLKALEAKQAEKDRQRKQIQALSFNPEEDEESFDDEDEEEPLEIKPHKWQTEECTEPRIKKIKKNPDVDTSFLPDREREEMDNKLREELRQEWAMKQATLKDQEIPITFSYWDGSGHRKCVTMKKGNSIYQFLQKCLEMLRKEFSELKTVMADQLMYVKEDLILPHHYTFYDFIVTKARGKSGPLFSFDVKDDIRMISDASVEKEETHAGKVLLRSWYERNKHIFPASRWEPYDPTKVYDKYTIKDKCKK.

Positions 77 to 113 are enriched in basic and acidic residues; the sequence is EDIVREREKKLAQKKEEKDREKLKALEAKQAEKDRQR. The interval 77 to 142 is disordered; it reads EDIVREREKK…EDEEEPLEIK (66 aa). Residues 123-138 are compositionally biased toward acidic residues; sequence PEEDEESFDDEDEEEP.

The protein belongs to the FAM50 family.

The protein is Protein FAM50 homolog of Aedes aegypti (Yellowfever mosquito).